The chain runs to 155 residues: Transcriptional regulator MraZ (155 aa).

SpoVT-AbrB domains follow at residues 7 to 63 and 92 to 135; these read REQH…EPSV and LDQT…EPLR.

This sequence belongs to the MraZ family. In terms of assembly, forms oligomers.

The protein localises to the cytoplasm. The protein resides in the nucleoid. In Chlorobaculum tepidum (strain ATCC 49652 / DSM 12025 / NBRC 103806 / TLS) (Chlorobium tepidum), this protein is Transcriptional regulator MraZ.